The primary structure comprises 471 residues: Trigger factor (471 aa).

Residues 162-243 (GDFVVMDLVA…VSQVQEQELP (82 aa)) enclose the PPIase FKBP-type domain. The tract at residues 436–471 (LRPDGTIGEPEDEIEAETEIEIEPAAETDTEADTEQ) is disordered. Residues 444–471 (EPEDEIEAETEIEIEPAAETDTEADTEQ) show a composition bias toward acidic residues.

This sequence belongs to the FKBP-type PPIase family. Tig subfamily.

The protein localises to the cytoplasm. It carries out the reaction [protein]-peptidylproline (omega=180) = [protein]-peptidylproline (omega=0). Its function is as follows. Involved in protein export. Acts as a chaperone by maintaining the newly synthesized protein in an open conformation. Functions as a peptidyl-prolyl cis-trans isomerase. The protein is Trigger factor of Nocardioides sp. (strain ATCC BAA-499 / JS614).